Here is a 447-residue protein sequence, read N- to C-terminus: Exodeoxyribonuclease 7 large subunit (447 aa).

Belongs to the XseA family. Heterooligomer composed of large and small subunits.

The protein localises to the cytoplasm. It carries out the reaction Exonucleolytic cleavage in either 5'- to 3'- or 3'- to 5'-direction to yield nucleoside 5'-phosphates.. Its function is as follows. Bidirectionally degrades single-stranded DNA into large acid-insoluble oligonucleotides, which are then degraded further into small acid-soluble oligonucleotides. This Lactobacillus helveticus (strain DPC 4571) protein is Exodeoxyribonuclease 7 large subunit.